The primary structure comprises 147 residues: MDTLTAISRWLAKQHVVTWCVCHEGELWCANAFYLFDAQHVAFYVLTDDKTRHAQMSGACAPVAGTVNGQPKTVARIRGVQFKGEIRRLEGQESDVARKAYLRRFPVARVLPAPVWEIRLDEIKFTDNTLGFGKKMRWLRDSSAQQA.

It belongs to the UPF0306 family.

The polypeptide is UPF0306 protein YhbP (Salmonella arizonae (strain ATCC BAA-731 / CDC346-86 / RSK2980)).